Here is a 144-residue protein sequence, read N- to C-terminus: Large ribosomal subunit protein uL16 (144 aa).

The protein belongs to the universal ribosomal protein uL16 family. Part of the 50S ribosomal subunit.

In terms of biological role, binds 23S rRNA and is also seen to make contacts with the A and possibly P site tRNAs. This Bacillus cereus (strain ATCC 10987 / NRS 248) protein is Large ribosomal subunit protein uL16.